Consider the following 208-residue polypeptide: Uracil phosphoribosyltransferase (208 aa).

Residues Arg78, Arg103, and 130–138 each bind 5-phospho-alpha-D-ribose 1-diphosphate; that span reads DPMLATGGS. Uracil is bound by residues Ile193 and 198-200; that span reads GDA. Asp199 is a binding site for 5-phospho-alpha-D-ribose 1-diphosphate.

This sequence belongs to the UPRTase family. Mg(2+) is required as a cofactor.

It carries out the reaction UMP + diphosphate = 5-phospho-alpha-D-ribose 1-diphosphate + uracil. It functions in the pathway pyrimidine metabolism; UMP biosynthesis via salvage pathway; UMP from uracil: step 1/1. Its activity is regulated as follows. Allosterically activated by GTP. In terms of biological role, catalyzes the conversion of uracil and 5-phospho-alpha-D-ribose 1-diphosphate (PRPP) to UMP and diphosphate. The chain is Uracil phosphoribosyltransferase from Shewanella putrefaciens (strain CN-32 / ATCC BAA-453).